A 314-amino-acid polypeptide reads, in one-letter code: Methionyl-tRNA formyltransferase (314 aa).

Position 112–115 (112–115 (SLLP)) interacts with (6S)-5,6,7,8-tetrahydrofolate.

Belongs to the Fmt family.

The catalysed reaction is L-methionyl-tRNA(fMet) + (6R)-10-formyltetrahydrofolate = N-formyl-L-methionyl-tRNA(fMet) + (6S)-5,6,7,8-tetrahydrofolate + H(+). Functionally, attaches a formyl group to the free amino group of methionyl-tRNA(fMet). The formyl group appears to play a dual role in the initiator identity of N-formylmethionyl-tRNA by promoting its recognition by IF2 and preventing the misappropriation of this tRNA by the elongation apparatus. The protein is Methionyl-tRNA formyltransferase of Aeromonas hydrophila subsp. hydrophila (strain ATCC 7966 / DSM 30187 / BCRC 13018 / CCUG 14551 / JCM 1027 / KCTC 2358 / NCIMB 9240 / NCTC 8049).